A 203-amino-acid chain; its full sequence is Glycerol-3-phosphate acyltransferase (203 aa).

4 helical membrane passes run 3 to 23, 75 to 95, 113 to 133, and 156 to 176; these read LASA…AILV, LGLE…GHLF, VILG…LIVA, and LLTG…LIYW.

The protein belongs to the PlsY family. As to quaternary structure, probably interacts with PlsX.

The protein localises to the cell inner membrane. The catalysed reaction is an acyl phosphate + sn-glycerol 3-phosphate = a 1-acyl-sn-glycero-3-phosphate + phosphate. Its pathway is lipid metabolism; phospholipid metabolism. Catalyzes the transfer of an acyl group from acyl-phosphate (acyl-PO(4)) to glycerol-3-phosphate (G3P) to form lysophosphatidic acid (LPA). This enzyme utilizes acyl-phosphate as fatty acyl donor, but not acyl-CoA or acyl-ACP. The sequence is that of Glycerol-3-phosphate acyltransferase from Thioalkalivibrio sulfidiphilus (strain HL-EbGR7).